A 465-amino-acid chain; its full sequence is GTPase Der (465 aa).

EngA-type G domains follow at residues 3-167 (PLVA…PEEG) and 179-352 (VRIA…ASAT). GTP contacts are provided by residues 9–16 (GRPNVGKS), 57–61 (DTGGI), 119–122 (NKID), 185–192 (GRPNVGKS), 232–236 (DTAGL), and 297–300 (NKWD). The KH-like domain maps to 353–437 (HEFSTSEVNQ…PVCFIFREGA (85 aa)).

The protein belongs to the TRAFAC class TrmE-Era-EngA-EngB-Septin-like GTPase superfamily. EngA (Der) GTPase family. Associates with the 50S ribosomal subunit.

In terms of biological role, GTPase that plays an essential role in the late steps of ribosome biogenesis. The sequence is that of GTPase Der from Xanthomonas oryzae pv. oryzae (strain MAFF 311018).